The sequence spans 686 residues: MSTFLLEIGLEEVPAHLVTSSESQLVARTKEFLAAHRLTVGDIKPFSTPRRLALQLCDVAEESEALSEEKRGPSVERAKDENGEWSKAAQGFARGQGATPEAFEERDGYVWLTKHTTGVPANQILSQIGEEVVSQMKFTTYMKWANHSFLYVRPIRWLVALLDEQVINFNVLDIATGRVTRGHRFLSTEHVTISDAQAYEETLQSAYVLADAENRKAQIKSQLETIANRNHWVLSLDNAPAQDLLEEVNNIVEWPTAFSGSFDQKYLEVPDEVLITSMREHQRFFYVRDTTGKLLPHFLSVRNGDTAHLDNVIAGNEKVLVARLEDAEFFYREDQQKKIADYMAKVKTLVFHEKIGTVYEHMQRVGLLAEKLADALDFDDDKKTDLARAAEIYKFDLMTGMVGEFDELQGVMGEHYARLFGENERVATAIREHYMPTSANGNIAKSDVGAVLAIADKLDAIVTFFAANLIPSGSNDPYGLRRAATGVVRTLTTKHWHIALQPVLAEFMAATGTVTASADLMAVLSFVVDRVRKLALDDDIRQDIVSAGTDNFATADIVYLTDRIQVLANHAHDNNFREVISALTRVARLAEKTPVSLNVNPQLFENETEKALYAATSELQLVALEANGAEALYQALAALQMPISAYFDATMVNVDNEQIKNNRYAQLNIINQLIAGLGNLEDIVIK.

A disordered region spans residues 65 to 99 (ALSEEKRGPSVERAKDENGEWSKAAQGFARGQGAT). The span at 67–84 (SEEKRGPSVERAKDENGE) shows a compositional bias: basic and acidic residues.

Belongs to the class-II aminoacyl-tRNA synthetase family. Tetramer of two alpha and two beta subunits.

It is found in the cytoplasm. It carries out the reaction tRNA(Gly) + glycine + ATP = glycyl-tRNA(Gly) + AMP + diphosphate. This is Glycine--tRNA ligase beta subunit from Leuconostoc citreum (strain KM20).